Consider the following 382-residue polypeptide: Histidinol-phosphate aminotransferase (382 aa).

K215 carries the post-translational modification N6-(pyridoxal phosphate)lysine. Positions 363 to 382 are disordered; that stretch reads NIDNQSKTHSQTSSIRKGTI.

It belongs to the class-II pyridoxal-phosphate-dependent aminotransferase family. Histidinol-phosphate aminotransferase subfamily. In terms of assembly, homodimer. Pyridoxal 5'-phosphate serves as cofactor.

It catalyses the reaction L-histidinol phosphate + 2-oxoglutarate = 3-(imidazol-4-yl)-2-oxopropyl phosphate + L-glutamate. Its pathway is amino-acid biosynthesis; L-histidine biosynthesis; L-histidine from 5-phospho-alpha-D-ribose 1-diphosphate: step 7/9. The chain is Histidinol-phosphate aminotransferase from Yersinia pseudotuberculosis serotype O:3 (strain YPIII).